The primary structure comprises 641 residues: Isomalto-dextranase (641 aa).

A signal peptide (tat-type signal) is located at residues 1 to 39 (MMNLSRRTLLTTGSAATLAYALGMAGSAQAATAVTARPG). D227 (nucleophile) is an active-site residue. D288 acts as the Proton donor in catalysis. One can recognise a CBM6 domain in the interval 500–640 (TRYPAAFAAW…AINLNWIELD (141 aa)). Residues 556 to 588 (SGYRYANATDDNTTSKTTTKKANPEKADRSTVD) form a disordered region. A compositionally biased stretch (low complexity) spans 561–576 (ANATDDNTTSKTTTKK). Basic and acidic residues predominate over residues 577-586 (ANPEKADRST).

It belongs to the glycosyl hydrolase 27 family. Post-translationally, predicted to be exported by the Tat system. The position of the signal peptide cleavage has been experimentally proven.

The protein localises to the secreted. It carries out the reaction Hydrolysis of (1-&gt;6)-alpha-D-glucosidic linkages in polysaccharides, to remove successive isomaltose units from the non-reducing ends of the chains.. The sequence is that of Isomalto-dextranase (imd) from Arthrobacter globiformis.